The following is a 235-amino-acid chain: Ribonuclease PH (235 aa).

Phosphate is bound by residues arginine 86 and 124 to 126 (GTR).

This sequence belongs to the RNase PH family. Homohexameric ring arranged as a trimer of dimers.

It catalyses the reaction tRNA(n+1) + phosphate = tRNA(n) + a ribonucleoside 5'-diphosphate. Its function is as follows. Phosphorolytic 3'-5' exoribonuclease that plays an important role in tRNA 3'-end maturation. Removes nucleotide residues following the 3'-CCA terminus of tRNAs; can also add nucleotides to the ends of RNA molecules by using nucleoside diphosphates as substrates, but this may not be physiologically important. Probably plays a role in initiation of 16S rRNA degradation (leading to ribosome degradation) during starvation. The polypeptide is Ribonuclease PH (Francisella tularensis subsp. mediasiatica (strain FSC147)).